Here is a 311-residue protein sequence, read N- to C-terminus: Heme A synthase (311 aa).

The Cytoplasmic segment spans residues 1 to 6 (MQRFIK). The helical transmembrane segment at 7-27 (WLAVITSLDLLIVLLGGALVT) threads the bilayer. Topologically, residues 28–62 (KTGSGQGCGKSWPLCNGEFVPSNLSMETIIELSHR) are extracellular. Cys-35 and Cys-42 are disulfide-bonded. Glu-58 is an active-site residue. His-61 serves as a coordination point for heme o. The chain crosses the membrane as a helical span at residues 63–83 (LTSGSAGILVTLLCILSWKYY). Over 84–91 (KHVRETKT) the chain is Cytoplasmic. The helical transmembrane segment at 92–112 (LAILSFVFLVAQALMGAAAVV) threads the bilayer. At 113-121 (WGQMPAVLA) the chain is on the extracellular side. Residues 122–142 (IHFGISLISFASVILLTCLIF) form a helical membrane-spanning segment. His-123 contacts heme o. Over 143–159 (EIDQKFDARSLIMDKKM) the chain is Cytoplasmic. Residues 160 to 180 (KFHIYGVTIYSYIVVYTGALV) form a helical membrane-spanning segment. Residues 181-211 (RHERASLACPDFPLCSKNRPMPTQLHEWVQM) are Extracellular-facing. The cysteines at positions 189 and 195 are disulfide-linked. Residues 212–232 (GHRVAAMLIFAWILYAMILAI) form a helical membrane-spanning segment. His-213 contacts heme b. Topologically, residues 233-243 (RHYKQQPVVYW) are cytoplasmic. Residues 244-264 (GWIISFILVTLQAIVGILVVF) traverse the membrane as a helical segment. Residues 265 to 271 (TNASLSM) are Extracellular-facing. The helical transmembrane segment at 272-292 (ALLHSLFISCLFAVLCYLVML) threads the bilayer. Residue His-275 coordinates heme b. Topologically, residues 293 to 311 (GTRSKVNAKEAASTSKQTK) are cytoplasmic.

Belongs to the COX15/CtaA family. Type 1 subfamily. In terms of assembly, interacts with CtaB. Heme b is required as a cofactor.

The protein resides in the cell membrane. It catalyses the reaction Fe(II)-heme o + 2 A + H2O = Fe(II)-heme a + 2 AH2. It functions in the pathway porphyrin-containing compound metabolism; heme A biosynthesis; heme A from heme O: step 1/1. Catalyzes the conversion of heme O to heme A by two successive hydroxylations of the methyl group at C8. The first hydroxylation forms heme I, the second hydroxylation results in an unstable dihydroxymethyl group, which spontaneously dehydrates, resulting in the formyl group of heme A. This chain is Heme A synthase, found in Bacillus cereus (strain ATCC 10987 / NRS 248).